Consider the following 101-residue polypeptide: MTLSAYLALALILFCIGLYGALTKRNTVIVLICIELMLNAVNINFVAFAKYGAHPSVHGHVFALFAIAVAAAEAAVGLAALIAFYRSRKTVQVDEANSLKH.

Helical transmembrane passes span 2 to 22, 28 to 48, and 62 to 82; these read TLSAYLALALILFCIGLYGAL, VIVLICIELMLNAVNINFVAF, and FALFAIAVAAAEAAVGLAALI.

Belongs to the complex I subunit 4L family. In terms of assembly, NDH-1 is composed of 14 different subunits. Subunits NuoA, H, J, K, L, M, N constitute the membrane sector of the complex.

The protein resides in the cell membrane. It catalyses the reaction a quinone + NADH + 5 H(+)(in) = a quinol + NAD(+) + 4 H(+)(out). Its function is as follows. NDH-1 shuttles electrons from NADH, via FMN and iron-sulfur (Fe-S) centers, to quinones in the respiratory chain. The immediate electron acceptor for the enzyme in this species is believed to be a menaquinone. Couples the redox reaction to proton translocation (for every two electrons transferred, four hydrogen ions are translocated across the cytoplasmic membrane), and thus conserves the redox energy in a proton gradient. This chain is NADH-quinone oxidoreductase subunit K, found in Geobacillus kaustophilus (strain HTA426).